The sequence spans 377 residues: Adaptive-response sensory kinase SasA (377 aa).

The 220-residue stretch at 154–373 folds into the Histidine kinase domain; that stretch reads MLVHDLRSPL…SFHFTLPVYR (220 aa). Residue His-157 is modified to Phosphohistidine; by autocatalysis.

As to quaternary structure, homooligomerizes. Interacts with KaiC. Participates in the KaiABC clock complex, whose core is composed of a KaiC homohexamer, 6 KaiB and up to 6 KaiA dimers. SasA and KaiB(fs) compete to bind to KaiC.

It catalyses the reaction ATP + protein L-histidine = ADP + protein N-phospho-L-histidine.. Functionally, member of the two-component regulatory system SasA/RpaA involved in genome-wide circadian gene expression. One of several clock output pathways. Participates in the Kai clock protein complex, the main circadian regulator in cyanobacteria, via its interaction with KaiC. KaiC enhances the autophosphorylation activity of SasA, which then transfers its phosphate group to RpaA to activate it. In addition to its output function, recruits fold-shifted KaiB (KaiB(fs)) to KaiC to cooperatively form the KaiB(6):KaiC(6) complex (independent of SasA kinase activity). Required for robustness of the circadian rhythm of gene expression and is involved in clock output, also required for adaptation to light/dark cycles. This chain is Adaptive-response sensory kinase SasA, found in Synechococcus sp. (strain JA-2-3B'a(2-13)) (Cyanobacteria bacterium Yellowstone B-Prime).